Consider the following 159-residue polypeptide: Large ribosomal subunit protein uL15 (159 aa).

The segment covering 1–18 (MKLNEIRDNEGSSKDRIR) has biased composition (basic and acidic residues). The interval 1–37 (MKLNEIRDNEGSSKDRIRVGRGIGSGKGKTGGRGVKG) is disordered. Residues 21–35 (RGIGSGKGKTGGRGV) are compositionally biased toward gly residues.

This sequence belongs to the universal ribosomal protein uL15 family. Part of the 50S ribosomal subunit.

Functionally, binds to the 23S rRNA. The sequence is that of Large ribosomal subunit protein uL15 from Agrobacterium fabrum (strain C58 / ATCC 33970) (Agrobacterium tumefaciens (strain C58)).